The chain runs to 320 residues: MDSFPVINMEKLEGQERAATMKLINDACENWGFFELVNHSIPVELMDEVERLTKEHYKKCMEQRFKELMASKVEGAVVDANDMDWESTFFIRHLPVSNLSEIPDLTDEHRKVMKEFAEKLEKLAEQVLDLLCENLGLEKGYLKMAFAGTTTGLPTFGTKVSNYPPCPRPELFKGLRAHTDAGGLILLFQDDRVAGLQLLKDGEWVDVPPMNHSIVINLGDQVEVITNGKYKSVMHRVVAQTDGNRMSLASFYNPGSDAVIFPAPALVEKEAEEKKEVYPKFVFEDYMNLYAGLKFQAKEPRFEVMKMKAVETANLSPITT.

The 101-residue stretch at 154–254 (PTFGTKVSNY…RMSLASFYNP (101 aa)) folds into the Fe2OG dioxygenase domain. Fe cation is bound by residues His-178, Asp-180, and His-235.

The protein belongs to the iron/ascorbate-dependent oxidoreductase family. Fe cation is required as a cofactor.

It carries out the reaction 1-aminocyclopropane-1-carboxylate + L-ascorbate + O2 = ethene + L-dehydroascorbate + hydrogen cyanide + CO2 + 2 H2O. It functions in the pathway alkene biosynthesis; ethylene biosynthesis via S-adenosyl-L-methionine; ethylene from S-adenosyl-L-methionine: step 2/2. The chain is 1-aminocyclopropane-1-carboxylate oxidase (ACO) from Persea americana (Avocado).